A 201-amino-acid polypeptide reads, in one-letter code: Holliday junction branch migration complex subunit RuvA (201 aa).

The segment at 1–64 is domain I; that stretch reads MYEYIKGKYI…QDFIGLYGFL (64 aa). The domain II stretch occupies residues 65 to 143; sequence TKDELEMFNK…STDISKGNSE (79 aa). The flexible linker stretch occupies residues 144 to 154; that stretch reads INNLDVDYDEH. Residues 154–201 form a domain III region; the sequence is HSKKLEEVRFALNSLGYSEKETDRAINNVDKSEGIENIIKSCLRFLMN.

It belongs to the RuvA family. As to quaternary structure, homotetramer. Forms an RuvA(8)-RuvB(12)-Holliday junction (HJ) complex. HJ DNA is sandwiched between 2 RuvA tetramers; dsDNA enters through RuvA and exits via RuvB. An RuvB hexamer assembles on each DNA strand where it exits the tetramer. Each RuvB hexamer is contacted by two RuvA subunits (via domain III) on 2 adjacent RuvB subunits; this complex drives branch migration. In the full resolvosome a probable DNA-RuvA(4)-RuvB(12)-RuvC(2) complex forms which resolves the HJ.

Its subcellular location is the cytoplasm. Its function is as follows. The RuvA-RuvB-RuvC complex processes Holliday junction (HJ) DNA during genetic recombination and DNA repair, while the RuvA-RuvB complex plays an important role in the rescue of blocked DNA replication forks via replication fork reversal (RFR). RuvA specifically binds to HJ cruciform DNA, conferring on it an open structure. The RuvB hexamer acts as an ATP-dependent pump, pulling dsDNA into and through the RuvAB complex. HJ branch migration allows RuvC to scan DNA until it finds its consensus sequence, where it cleaves and resolves the cruciform DNA. In Clostridium acetobutylicum (strain ATCC 824 / DSM 792 / JCM 1419 / IAM 19013 / LMG 5710 / NBRC 13948 / NRRL B-527 / VKM B-1787 / 2291 / W), this protein is Holliday junction branch migration complex subunit RuvA.